Here is a 154-residue protein sequence, read N- to C-terminus: 6,7-dimethyl-8-ribityllumazine synthase (154 aa).

5-amino-6-(D-ribitylamino)uracil-binding positions include Trp-22, 56–58, and 80–82; these read AWE and CVV. 85-86 is a binding site for (2S)-2-hydroxy-3-oxobutyl phosphate; it reads DT. His-88 acts as the Proton donor in catalysis. Residue Asn-113 participates in 5-amino-6-(D-ribitylamino)uracil binding. Position 127 (Arg-127) interacts with (2S)-2-hydroxy-3-oxobutyl phosphate.

It belongs to the DMRL synthase family. In terms of assembly, forms an icosahedral capsid composed of 60 subunits, arranged as a dodecamer of pentamers.

It carries out the reaction (2S)-2-hydroxy-3-oxobutyl phosphate + 5-amino-6-(D-ribitylamino)uracil = 6,7-dimethyl-8-(1-D-ribityl)lumazine + phosphate + 2 H2O + H(+). It participates in cofactor biosynthesis; riboflavin biosynthesis; riboflavin from 2-hydroxy-3-oxobutyl phosphate and 5-amino-6-(D-ribitylamino)uracil: step 1/2. Catalyzes the formation of 6,7-dimethyl-8-ribityllumazine by condensation of 5-amino-6-(D-ribitylamino)uracil with 3,4-dihydroxy-2-butanone 4-phosphate. This is the penultimate step in the biosynthesis of riboflavin. This is 6,7-dimethyl-8-ribityllumazine synthase from Xylella fastidiosa (strain M23).